Reading from the N-terminus, the 383-residue chain is S-adenosylmethionine synthase (383 aa).

His15 contacts ATP. Asp17 serves as a coordination point for Mg(2+). Glu43 contacts K(+). Positions 56 and 99 each coordinate L-methionine. The interval 99-109 (QSPDINQGVDR) is flexible loop. ATP-binding positions include 164-166 (DAK), 230-231 (RF), Asp239, 245-246 (RK), Ala262, and Lys266. Asp239 is a binding site for L-methionine. Residue Lys270 participates in L-methionine binding.

It belongs to the AdoMet synthase family. In terms of assembly, homotetramer; dimer of dimers. Mg(2+) serves as cofactor. The cofactor is K(+).

The protein resides in the cytoplasm. It catalyses the reaction L-methionine + ATP + H2O = S-adenosyl-L-methionine + phosphate + diphosphate. Its pathway is amino-acid biosynthesis; S-adenosyl-L-methionine biosynthesis; S-adenosyl-L-methionine from L-methionine: step 1/1. Catalyzes the formation of S-adenosylmethionine (AdoMet) from methionine and ATP. The overall synthetic reaction is composed of two sequential steps, AdoMet formation and the subsequent tripolyphosphate hydrolysis which occurs prior to release of AdoMet from the enzyme. This is S-adenosylmethionine synthase from Pectobacterium carotovorum subsp. carotovorum (strain PC1).